The primary structure comprises 368 residues: Methionine import ATP-binding protein MetN (368 aa).

In terms of domain architecture, ABC transporter spans 5–260 (IELNNLSVQF…PKEALTKQFI (256 aa)). ATP is bound at residue 41–48 (GYSGAGKS).

Belongs to the ABC transporter superfamily. Methionine importer (TC 3.A.1.24) family. The complex is composed of two ATP-binding proteins (MetN), two transmembrane proteins (MetI) and a solute-binding protein (MetQ).

Its subcellular location is the cell membrane. The catalysed reaction is L-methionine(out) + ATP + H2O = L-methionine(in) + ADP + phosphate + H(+). It carries out the reaction D-methionine(out) + ATP + H2O = D-methionine(in) + ADP + phosphate + H(+). Part of the ABC transporter complex MetNIQ involved in methionine import. Responsible for energy coupling to the transport system. The protein is Methionine import ATP-binding protein MetN of Lactococcus lactis subsp. cremoris (strain MG1363).